Consider the following 348-residue polypeptide: Succinylglutamate desuccinylase (348 aa).

The Zn(2+) site is built by His-67, Glu-70, and His-164. Residue Glu-228 is part of the active site.

The protein belongs to the AspA/AstE family. Succinylglutamate desuccinylase subfamily. Zn(2+) is required as a cofactor.

It catalyses the reaction N-succinyl-L-glutamate + H2O = L-glutamate + succinate. Its pathway is amino-acid degradation; L-arginine degradation via AST pathway; L-glutamate and succinate from L-arginine: step 5/5. In terms of biological role, transforms N(2)-succinylglutamate into succinate and glutamate. The polypeptide is Succinylglutamate desuccinylase (Shewanella denitrificans (strain OS217 / ATCC BAA-1090 / DSM 15013)).